Reading from the N-terminus, the 201-residue chain is 3-isopropylmalate dehydratase small subunit (201 aa).

The protein belongs to the LeuD family. LeuD type 1 subfamily. In terms of assembly, heterodimer of LeuC and LeuD.

It catalyses the reaction (2R,3S)-3-isopropylmalate = (2S)-2-isopropylmalate. It participates in amino-acid biosynthesis; L-leucine biosynthesis; L-leucine from 3-methyl-2-oxobutanoate: step 2/4. Catalyzes the isomerization between 2-isopropylmalate and 3-isopropylmalate, via the formation of 2-isopropylmaleate. The sequence is that of 3-isopropylmalate dehydratase small subunit from Erwinia tasmaniensis (strain DSM 17950 / CFBP 7177 / CIP 109463 / NCPPB 4357 / Et1/99).